The following is a 72-amino-acid chain: Rubredoxin in uptake hydrogenase operon (72 aa).

Positions 19-70 constitute a Rubredoxin-like domain; the sequence is DAVLECKICWHRYDPAVGDEVWQILAGTPFAALPAHWRCPQCDGDREQFMVV. Fe cation contacts are provided by Cys-24, Cys-27, Cys-57, and Cys-60.

Belongs to the rubredoxin family. The cofactor is Fe(3+).

Could be an electron transport intermediate in hydrogen oxidation. The chain is Rubredoxin in uptake hydrogenase operon (hupR) from Azotobacter chroococcum mcd 1.